Reading from the N-terminus, the 569-residue chain is uncharacterized protein (569 aa).

The chain crosses the membrane as a helical span at residues 2–22 (VVIAALLGSLAVLAFLFYLWY).

It localises to the membrane. This is an uncharacterized protein from Mycoplasma pneumoniae (strain ATCC 29342 / M129 / Subtype 1) (Mycoplasmoides pneumoniae).